Consider the following 96-residue polypeptide: Protein Vpr (96 aa).

The interval 1–42 (MEQAPEDQGPQREPYNQWALELLEELKNEAVRHFPRIWLHGL) is homooligomerization. Phosphoserine; by host is present on residues Ser79, Ser94, and Ser96.

Belongs to the HIV-1 VPR protein family. Homooligomer, may form homodimer. Interacts with p6-gag region of the Pr55 Gag precursor protein through a (Leu-X-X)4 motif near the C-terminus of the P6gag protein. Interacts with host UNG. May interact with host RAD23A/HHR23A. Interacts with host VPRBP/DCAF1, leading to hijack the CUL4A-RBX1-DDB1-DCAF1/VPRBP complex, mediating ubiquitination of host proteins such as TERT and ZGPAT and arrest of the cell cycle in G2 phase. Post-translationally, phosphorylated on several residues by host. These phosphorylations regulate VPR activity for the nuclear import of the HIV-1 pre-integration complex.

The protein localises to the virion. It localises to the host nucleus. Its subcellular location is the host extracellular space. During virus replication, may deplete host UNG protein, and incude G2-M cell cycle arrest. Acts by targeting specific host proteins for degradation by the 26S proteasome, through association with the cellular CUL4A-DDB1 E3 ligase complex by direct interaction with host VPRPB/DCAF-1. Cell cycle arrest reportedly occurs within hours of infection and is not blocked by antiviral agents, suggesting that it is initiated by the VPR carried into the virion. Additionally, VPR induces apoptosis in a cell cycle dependent manner suggesting that these two effects are mechanistically linked. Detected in the serum and cerebrospinal fluid of AIDS patient, VPR may also induce cell death to bystander cells. Functionally, during virus entry, plays a role in the transport of the viral pre-integration (PIC) complex to the host nucleus. This function is crucial for viral infection of non-dividing macrophages. May act directly at the nuclear pore complex, by binding nucleoporins phenylalanine-glycine (FG)-repeat regions. In Human immunodeficiency virus type 1 group M subtype B (isolate MN) (HIV-1), this protein is Protein Vpr.